We begin with the raw amino-acid sequence, 107 residues long: Toluene 1,2-dioxygenase system ferredoxin subunit (107 aa).

One can recognise a Rieske domain in the interval Thr4–Val99. [2Fe-2S] cluster-binding residues include Cys43, His45, Cys62, and His65.

The protein belongs to the bacterial ring-hydroxylating dioxygenase ferredoxin component family. In terms of assembly, this dioxygenase system consists of four proteins: the two subunits of the hydroxylase component (todC1 and todC2), a ferredoxin (TodB) and a ferredoxin reductase (TodA).

It participates in xenobiotic degradation; toluene degradation. Functionally, this protein seems to be a 2Fe-2S ferredoxin. This is Toluene 1,2-dioxygenase system ferredoxin subunit (todB) from Pseudomonas putida (strain ATCC 700007 / DSM 6899 / JCM 31910 / BCRC 17059 / LMG 24140 / F1).